Consider the following 417-residue polypeptide: Cobalamin binding intrinsic factor (417 aa).

A signal peptide spans 1–18 (MAWFALYLLSLLWATAGT). 3 cysteine pairs are disulfide-bonded: Cys26–Cys246, Cys103–Cys288, and Cys143–Cys182. Cob(II)alamin is bound at residue Asp171. A Phosphoserine modification is found at Ser191. Cob(II)alamin contacts are provided by Asp222 and Gln270. N-linked (GlcNAc...) asparagine glycans are attached at residues Asn311, Asn330, and Asn334. Cob(II)alamin-binding positions include 365 to 370 (SWGLVV) and 386 to 395 (WQFLSGVTPL). Asn413 is a glycosylation site (N-linked (GlcNAc...) asparagine).

The protein belongs to the eukaryotic cobalamin transport proteins family. As to quaternary structure, interacts with CUBN (via CUB domains). Gastric mucosa.

The protein resides in the secreted. In terms of biological role, promotes absorption of the essential vitamin cobalamin (Cbl) in the ileum. After interaction with CUBN, the CBLIF-cobalamin complex is internalized via receptor-mediated endocytosis. The sequence is that of Cobalamin binding intrinsic factor from Homo sapiens (Human).